Here is a 362-residue protein sequence, read N- to C-terminus: [LysW]-lysine hydrolase (362 aa).

Residue H69 coordinates Zn(2+). D71 is a catalytic residue. D94 contributes to the Zn(2+) binding site. E127 functions as the Proton acceptor in the catalytic mechanism. The Zn(2+) site is built by E128, E151, and H334.

Belongs to the peptidase M20A family. LysK subfamily. The cofactor is Zn(2+). Co(2+) is required as a cofactor.

The protein localises to the cytoplasm. The enzyme catalyses [amino-group carrier protein]-C-terminal-gamma-(L-lysyl)-L-glutamate + H2O = [amino-group carrier protein]-C-terminal-L-glutamate + L-lysine. It functions in the pathway amino-acid biosynthesis; L-lysine biosynthesis via AAA pathway; L-lysine from L-alpha-aminoadipate (Thermus route): step 5/5. Functionally, catalyzes the release of L-lysine from [LysW]-gamma-L-lysine. The chain is [LysW]-lysine hydrolase from Deinococcus radiodurans (strain ATCC 13939 / DSM 20539 / JCM 16871 / CCUG 27074 / LMG 4051 / NBRC 15346 / NCIMB 9279 / VKM B-1422 / R1).